Consider the following 384-residue polypeptide: S-adenosylmethionine synthase (384 aa).

His15 is a binding site for ATP. Asp17 is a Mg(2+) binding site. Residue Glu43 participates in K(+) binding. 2 residues coordinate L-methionine: Glu56 and Gln99. Residues 99–109 (QSPDINQGVDR) form a flexible loop region. ATP-binding positions include 164-166 (DAK), 230-231 (RF), Asp239, 245-246 (RK), Ala262, and Lys266. An L-methionine-binding site is contributed by Asp239. Lys270 contacts L-methionine.

This sequence belongs to the AdoMet synthase family. In terms of assembly, homotetramer; dimer of dimers. It depends on Mg(2+) as a cofactor. K(+) serves as cofactor.

The protein resides in the cytoplasm. The catalysed reaction is L-methionine + ATP + H2O = S-adenosyl-L-methionine + phosphate + diphosphate. The protein operates within amino-acid biosynthesis; S-adenosyl-L-methionine biosynthesis; S-adenosyl-L-methionine from L-methionine: step 1/1. In terms of biological role, catalyzes the formation of S-adenosylmethionine (AdoMet) from methionine and ATP. The overall synthetic reaction is composed of two sequential steps, AdoMet formation and the subsequent tripolyphosphate hydrolysis which occurs prior to release of AdoMet from the enzyme. This chain is S-adenosylmethionine synthase, found in Erwinia tasmaniensis (strain DSM 17950 / CFBP 7177 / CIP 109463 / NCPPB 4357 / Et1/99).